Here is a 316-residue protein sequence, read N- to C-terminus: L-lactate dehydrogenase 1 (316 aa).

Residues Val17, Asp38, Lys43, and Tyr69 each contribute to the NAD(+) site. Residues Arg92 and 124-127 (NPVD) contribute to the substrate site. NAD(+)-binding positions include 122–124 (VSN) and Thr147. Substrate is bound at residue 152–155 (DTSR). Catalysis depends on His179, which acts as the Proton acceptor. Thr234 lines the substrate pocket.

This sequence belongs to the LDH/MDH superfamily. LDH family. Homotetramer.

It is found in the cytoplasm. It carries out the reaction (S)-lactate + NAD(+) = pyruvate + NADH + H(+). It functions in the pathway fermentation; pyruvate fermentation to lactate; (S)-lactate from pyruvate: step 1/1. Catalyzes the conversion of lactate to pyruvate. The polypeptide is L-lactate dehydrogenase 1 (Bifidobacterium longum subsp. longum (strain ATCC 15707 / DSM 20219 / JCM 1217 / NCTC 11818 / E194b)).